The sequence spans 109 residues: MTNITSSFLCLLILLLFCLSFGYSLHGDKDEVLSVDVGSNAKVMKHLDGDDAMKKAQVRGRSGQEFSKETTKMMMKKTTKKETNVEEEDDLVAYTADYWKPRHHPPKNN.

The N-terminal stretch at 1 to 24 is a signal peptide; sequence MTNITSSFLCLLILLLFCLSFGYS. Residues 25-96 constitute a propeptide that is removed on maturation; sequence LHGDKDEVLS…EEDDLVAYTA (72 aa). Positions 54–88 are disordered; that stretch reads KKAQVRGRSGQEFSKETTKMMMKKTTKKETNVEEE. Position 98 is a sulfotyrosine (Tyr-98). The residue at position 106 (Pro-106) is a Hydroxyproline.

The protein belongs to the RGF family. In terms of assembly, binds to LRR receptor-like serine/threonine-protein kinases RGI1, RGI2 and RGI3 to trigger their dimerization with SERK proteins and subsequent signaling. As to expression, expressed in root tips.

The protein resides in the secreted. In terms of biological role, signaling peptide (root growth factor) that maintains the postembryonic root stem cell niche in a PIN2-traffic dependent manner. Root growth factor that regulates the pattern of root growth and lateral root development by modulating the length and the number of cortical cells in the root apical meristem (RAM), and the anticlinal asymmetric cell divisions in lateral root initiation cells. Influences the longitudinal growth rate in the primary root in response to phosphate ion (Pi)-deprivation. The polypeptide is Protein GOLVEN 5 (Arabidopsis thaliana (Mouse-ear cress)).